A 418-amino-acid chain; its full sequence is Tyrosine--tRNA ligase (418 aa).

Tyrosine 39 provides a ligand contact to L-tyrosine. The 'HIGH' region motif lies at 44–53 (CTAASLHVGH). Tyrosine 176 and glutamine 180 together coordinate L-tyrosine. A 'KMSKS' region motif is present at residues 236-240 (KMGKT). Position 239 (lysine 239) interacts with ATP. The S4 RNA-binding domain maps to 350 to 418 (IGVLVAFAEK…KKKHVLLRLA (69 aa)).

It belongs to the class-I aminoacyl-tRNA synthetase family. TyrS type 1 subfamily. Homodimer.

The protein resides in the cytoplasm. It carries out the reaction tRNA(Tyr) + L-tyrosine + ATP = L-tyrosyl-tRNA(Tyr) + AMP + diphosphate + H(+). Catalyzes the attachment of tyrosine to tRNA(Tyr) in a two-step reaction: tyrosine is first activated by ATP to form Tyr-AMP and then transferred to the acceptor end of tRNA(Tyr). The chain is Tyrosine--tRNA ligase from Rhodopseudomonas palustris (strain ATCC BAA-98 / CGA009).